The following is a 341-amino-acid chain: Inner membrane ABC transporter permease protein YejE (341 aa).

The Cytoplasmic segment spans residues 1–21 (MSRLSPVNQARWARFRHNRRG). A helical transmembrane segment spans residues 22 to 42 (YWSLWIFLVLFGLSLCSELIA). Residues 43–143 (NDKPLLVRYD…ARILYGTRIS (101 aa)) lie on the Periplasmic side of the membrane. Residues 140–332 (TRISVLFGLM…LLIFIGEAVR (193 aa)) form the ABC transmembrane type-1 domain. A helical transmembrane segment spans residues 144–164 (VLFGLMLTLCSSVMGVLAGAL). The Cytoplasmic portion of the chain corresponds to 165–178 (QGYYGGKVDLWGQR). Residues 179–199 (FIEVWSGMPTLFLIILLSSVV) form a helical membrane-spanning segment. Residues 200-201 (QP) lie on the Periplasmic side of the membrane. A helical transmembrane segment spans residues 202 to 222 (NFWWLLAITVLFGWMSLVGVV). Topologically, residues 223 to 252 (RAEFLRTRNFDYIRAAQALGVSDRSIILRH) are cytoplasmic. Residues 253 to 273 (MLPNAMVATLTFLPFILCSSI) form a helical membrane-spanning segment. The Periplasmic segment spans residues 274 to 307 (TTLTSLDFLGFGLPLGSPSLGELLLQGKNNLQAP). Residues 308–328 (WLGITAFLSVAILLSLLIFIG) form a helical membrane-spanning segment. Residues 329-341 (EAVRDAFDPNKAV) lie on the Cytoplasmic side of the membrane.

This sequence belongs to the binding-protein-dependent transport system permease family. OppBC subfamily.

The protein localises to the cell inner membrane. Its function is as follows. Probably part of a binding-protein-dependent transport system. Probably responsible for the translocation of the substrate across the membrane. The polypeptide is Inner membrane ABC transporter permease protein YejE (yejE) (Escherichia coli (strain K12)).